Here is a 292-residue protein sequence, read N- to C-terminus: NAD kinase (292 aa).

The Proton acceptor role is filled by Asp-73. Residues 73–74 (DG), 147–148 (NE), His-158, Arg-175, Asp-177, 188–193 (TAYSLS), and Gln-247 contribute to the NAD(+) site.

The protein belongs to the NAD kinase family. It depends on a divalent metal cation as a cofactor.

The protein resides in the cytoplasm. It catalyses the reaction NAD(+) + ATP = ADP + NADP(+) + H(+). Its function is as follows. Involved in the regulation of the intracellular balance of NAD and NADP, and is a key enzyme in the biosynthesis of NADP. Catalyzes specifically the phosphorylation on 2'-hydroxyl of the adenosine moiety of NAD to yield NADP. In Salmonella choleraesuis (strain SC-B67), this protein is NAD kinase.